A 78-amino-acid polypeptide reads, in one-letter code: uncharacterized protein (78 aa).

The segment at 1–28 (MGGGNAQKSAMARAKNLEKAKAAGKGSQ) is disordered.

This is an uncharacterized protein from Arabidopsis thaliana (Mouse-ear cress).